We begin with the raw amino-acid sequence, 188 residues long: Adenine phosphoribosyltransferase (188 aa).

This sequence belongs to the purine/pyrimidine phosphoribosyltransferase family. As to quaternary structure, homodimer.

It localises to the cytoplasm. It catalyses the reaction AMP + diphosphate = 5-phospho-alpha-D-ribose 1-diphosphate + adenine. The protein operates within purine metabolism; AMP biosynthesis via salvage pathway; AMP from adenine: step 1/1. Its function is as follows. Catalyzes a salvage reaction resulting in the formation of AMP, that is energically less costly than de novo synthesis. The sequence is that of Adenine phosphoribosyltransferase from Paraburkholderia phymatum (strain DSM 17167 / CIP 108236 / LMG 21445 / STM815) (Burkholderia phymatum).